Reading from the N-terminus, the 653-residue chain is Poly [ADP-ribose] polymerase 2 (653 aa).

The 35-residue stretch at 2-36 (SARLRVADVRAELQRRGLDVSGTKPALVRRLDAAI) folds into the SAP 1 domain. Positions 64-84 (NCGNNKRKRSGDGGEEGNGDT) are disordered. The short motif at 69 to 72 (KRKR) is the Nuclear localization signal element. An SAP 2 domain is found at 91–125 (LEGMSYRELQGLAKARGVAANGGKKDVIQRLLSAT). In terms of domain architecture, WGR spans 179-276 (NYHVLQVGDE…KNFKCYAKKY (98 aa)). The PARP alpha-helical domain occupies 301–419 (ETKLETRIAQ…EIEIATKLLE (119 aa)). The region spanning 427-653 (DPLYARYKQL…LHVNFNFKRR (227 aa)) is the PARP catalytic domain.

This sequence belongs to the ARTD/PARP family.

It localises to the nucleus. It catalyses the reaction NAD(+) + (ADP-D-ribosyl)n-acceptor = nicotinamide + (ADP-D-ribosyl)n+1-acceptor + H(+).. The enzyme catalyses L-aspartyl-[protein] + NAD(+) = 4-O-(ADP-D-ribosyl)-L-aspartyl-[protein] + nicotinamide. The catalysed reaction is L-glutamyl-[protein] + NAD(+) = 5-O-(ADP-D-ribosyl)-L-glutamyl-[protein] + nicotinamide. Involved in the base excision repair (BER) pathway, by catalyzing the poly(ADP-ribosyl)ation of a limited number of acceptor proteins involved in chromatin architecture and in DNA metabolism. This modification follows DNA damages and appears as an obligatory step in a detection/signaling pathway leading to the reparation of DNA strand breaks. This is Poly [ADP-ribose] polymerase 2 (PARP2) from Zea mays (Maize).